Consider the following 1165-residue polypeptide: Error-prone DNA polymerase (1165 aa).

Residues 1111-1165 (SEGLARPPLPTGADLYEPLTYEPLNGDRRDNPDAPAQRLRHPRDVRILPPSRDFH) form a disordered region. Over residues 1152–1165 (PRDVRILPPSRDFH) the composition is skewed to basic and acidic residues.

Belongs to the DNA polymerase type-C family. DnaE2 subfamily.

It is found in the cytoplasm. It catalyses the reaction DNA(n) + a 2'-deoxyribonucleoside 5'-triphosphate = DNA(n+1) + diphosphate. DNA polymerase involved in damage-induced mutagenesis and translesion synthesis (TLS). It is not the major replicative DNA polymerase. This chain is Error-prone DNA polymerase, found in Rhodopseudomonas palustris (strain HaA2).